The following is a 309-amino-acid chain: Serine/threonine-protein phosphatase 2A catalytic subunit beta isoform (309 aa).

Mn(2+) is bound by residues Asp-57, His-59, Asp-85, and Asn-117. His-118 acts as the Proton donor in catalysis. Positions 167 and 241 each coordinate Mn(2+). Phosphotyrosine is present on Tyr-307. Leu-309 carries the leucine methyl ester modification.

Belongs to the PPP phosphatase family. PP-1 subfamily. In terms of assembly, PP2A consists of a common heterodimeric core enzyme (composed of a 36 kDa catalytic subunit (subunit C) and a 65 kDa constant regulatory subunit (PR65) (subunit A)) that associates with a variety of regulatory subunits. Proteins that associate with the core dimer include three families of regulatory subunits B (the R2/B/PR55/B55, R3/B''/PR72/PR130/PR59 and R5/B'/B56 families), the 48 kDa variable regulatory subunit, viral proteins, and cell signaling molecules. Binds PPME1. May indirectly interact with SGO1, most probably through regulatory B56 subunits. Found in a complex with at least ARL2, PPP2CB, PPP2R1A, PPP2R2A, PPP2R5E and TBCD. Interacts with TBCD. Interacts with CTTNBP2NL. Interacts with PTPA. Part of the core of STRIPAK complexes composed of PP2A catalytic and scaffolding subunits, the striatins (PP2A regulatory subunits), the striatin-associated proteins MOB4, STRIP1 and STRIP2, PDCD10 and members of the STE20 kinases, such as STK24 and STK26. Mn(2+) is required as a cofactor. Reversibly methyl esterified on Leu-309 by leucine carboxyl methyltransferase 1 (LCMT1) and protein phosphatase methylesterase 1 (PPME1). Carboxyl methylation influences the affinity of the catalytic subunit for the different regulatory subunits, thereby modulating the PP2A holoenzyme's substrate specificity, enzyme activity and cellular localization. In terms of processing, phosphorylation of either threonine (by autophosphorylation-activated protein kinase) or tyrosine results in inactivation of the phosphatase. Auto-dephosphorylation has been suggested as a mechanism for reactivation. Post-translationally, may be monoubiquitinated by NOSIP.

The protein resides in the cytoplasm. It is found in the nucleus. It localises to the chromosome. The protein localises to the centromere. Its subcellular location is the cytoskeleton. The protein resides in the spindle pole. It carries out the reaction O-phospho-L-seryl-[protein] + H2O = L-seryl-[protein] + phosphate. The catalysed reaction is O-phospho-L-threonyl-[protein] + H2O = L-threonyl-[protein] + phosphate. Its function is as follows. Catalytic subunit of protein phosphatase 2A (PP2A), a serine/threonine phosphatase involved in the regulation of a wide variety of enzymes, signal transduction pathways, and cellular events. PP2A can modulate the activity of phosphorylase B kinase, casein kinase 2, mitogen-stimulated S6 kinase, and MAP-2 kinase. Part of the striatin-interacting phosphatase and kinase (STRIPAK) complexes. STRIPAK complexes have critical roles in protein (de)phosphorylation and are regulators of multiple signaling pathways including Hippo, MAPK, nuclear receptor and cytoskeleton remodeling. Different types of STRIPAK complexes are involved in a variety of biological processes such as cell growth, differentiation, apoptosis, metabolism and immune regulation. This is Serine/threonine-protein phosphatase 2A catalytic subunit beta isoform (PPP2CB) from Bos taurus (Bovine).